A 185-amino-acid chain; its full sequence is Ribosome-recycling factor (185 aa).

It belongs to the RRF family.

The protein localises to the cytoplasm. Responsible for the release of ribosomes from messenger RNA at the termination of protein biosynthesis. May increase the efficiency of translation by recycling ribosomes from one round of translation to another. The polypeptide is Ribosome-recycling factor (Novosphingobium aromaticivorans (strain ATCC 700278 / DSM 12444 / CCUG 56034 / CIP 105152 / NBRC 16084 / F199)).